Here is a 41-residue protein sequence, read N- to C-terminus: Large ribosomal subunit protein bL36A (41 aa).

Belongs to the bacterial ribosomal protein bL36 family.

The sequence is that of Large ribosomal subunit protein bL36A from Vibrio cholerae serotype O1 (strain ATCC 39541 / Classical Ogawa 395 / O395).